The following is a 904-amino-acid chain: E3 SUMO-protein ligase SIZ1 (904 aa).

Acidic residues predominate over residues 1–13; it reads MINLEDYWEDETP. The tract at residues 1 to 21 is disordered; sequence MINLEDYWEDETPGPDREPTN. The 35-residue stretch at 34–68 folds into the SAP domain; the sequence is MELLKVSELKDICRSVSFPVSGRKAVLQDLIRNFL. Positions 122–170 are disordered; the sequence is MEGPPTVQQQSPSVIRQSPTQRRKTSTTSSTSRAPPPTNPDASSSSSSF. Polar residues predominate over residues 127-136; it reads TVQQQSPSVI. The residue at position 132 (serine 132) is a Phosphoserine. A compositionally biased stretch (low complexity) spans 137 to 154; that stretch reads RQSPTQRRKTSTTSSTSR. A PINIT domain is found at 162 to 314; that stretch reads DASSSSSSFA…KLFGYIVEMI (153 aa). The SP-RING-type zinc finger occupies 344–431; it reads EDEEMGLTTT…LQNCQKNVEQ (88 aa). Residues cysteine 377, histidine 379, cysteine 400, and cysteine 403 each coordinate Zn(2+). Disordered regions lie at residues 443 to 584, 596 to 616, and 672 to 733; these read ILED…DDDR, STNT…TLDP, and SPDV…ISDS. Acidic residues predominate over residues 444-454; that stretch reads LEDDDDSDSDS. Over residues 501-511 the composition is skewed to basic and acidic residues; the sequence is NNHDDSNRHSN. A compositionally biased stretch (low complexity) spans 512-553; that stretch reads DNNNNSIKNNDSHNKNNNNNNNNNNNNNDNNNSIENNDSNSN. Composition is skewed to polar residues over residues 561-574, 596-611, and 672-683; these read RSNT…KNLM, STNT…SAPS, and SPDVSVSSPTPR. Low complexity predominate over residues 684–699; sequence NTASNASSSALSTPPL. Positions 721–733 are enriched in polar residues; that stretch reads INSNSYTASISDS. Residue serine 794 is modified to Phosphoserine. The required for localization at the bud neck stretch occupies residues 794–904; it reads SLPTTEAITR…QDYGKKYNSG (111 aa). The span at 877–894 shows a compositional bias: polar residues; sequence RQLSNTSSTSPIMGTWKT. Positions 877-904 are disordered; the sequence is RQLSNTSSTSPIMGTWKTQDYGKKYNSG.

The protein belongs to the PIAS family. As to quaternary structure, interacts with UBC9 and CDC3. Phosphorylated in early M-phase. In terms of processing, autosumoylated upon ethanol stress.

Its subcellular location is the cytoplasm. The protein resides in the nucleus. It is found in the bud neck. The protein operates within protein modification; protein sumoylation. Acts as an E3 ligase mediating SUMO/Smt3 attachment to septins and PCNA. May be involved in chromosome maintenance. This chain is E3 SUMO-protein ligase SIZ1 (SIZ1), found in Saccharomyces cerevisiae (strain ATCC 204508 / S288c) (Baker's yeast).